The following is a 368-amino-acid chain: P2X receptor C (368 aa).

The Cytoplasmic portion of the chain corresponds to 1–24 (MLDWDSILAYNTIKVVRIRDRRLG). Residues 25–45 (ILHLIFMIAIISYVVIYSAII) traverse the membrane as a helical segment. Topologically, residues 46 to 368 (KKGYLSIEEP…DKLYHNIEAL (323 aa)) are lumenal. The pore-forming motif stretch occupies residues 282–295 (RHAIRLIFIQTGVI).

It belongs to the P2X receptor family.

It localises to the contractile vacuole membrane. In terms of biological role, P2X receptors are ligand-gated ion channels that play a role in intracellular calcium signaling. ATP does not evoke inward currents in p2xC. Not essential for osmoregulation. This Dictyostelium discoideum (Social amoeba) protein is P2X receptor C (p2xC).